The chain runs to 334 residues: Glycerol-3-phosphate dehydrogenase [NAD(P)+] (334 aa).

Positions 14 and 108 each coordinate NADPH. 3 residues coordinate sn-glycerol 3-phosphate: Lys108, Gly140, and Ser142. Ala144 is an NADPH binding site. The sn-glycerol 3-phosphate site is built by Lys195, Asp248, Ser258, Arg259, and Asn260. The active-site Proton acceptor is the Lys195. Arg259 contacts NADPH. Glu285 lines the NADPH pocket.

Belongs to the NAD-dependent glycerol-3-phosphate dehydrogenase family.

The protein resides in the cytoplasm. It catalyses the reaction sn-glycerol 3-phosphate + NAD(+) = dihydroxyacetone phosphate + NADH + H(+). The catalysed reaction is sn-glycerol 3-phosphate + NADP(+) = dihydroxyacetone phosphate + NADPH + H(+). The protein operates within membrane lipid metabolism; glycerophospholipid metabolism. Functionally, catalyzes the reduction of the glycolytic intermediate dihydroxyacetone phosphate (DHAP) to sn-glycerol 3-phosphate (G3P), the key precursor for phospholipid synthesis. This is Glycerol-3-phosphate dehydrogenase [NAD(P)+] from Mesoplasma florum (strain ATCC 33453 / NBRC 100688 / NCTC 11704 / L1) (Acholeplasma florum).